The primary structure comprises 151 residues: Mating pheromone 3 (151 aa).

An N-terminal signal peptide occupies residues 1 to 16; sequence MKAIFIILAILMVTQA. Positions 17–52 are excised as a propeptide; the sequence is FKMTSKVNTKLQSQIQSKFQSKNKLASTFQTSSQLK.

It is found in the secreted. In terms of biological role, mating ciliate pheromones (or gamones) are diffusible extracellular communication signals that distinguish different intraspecific classes of cells commonly referred to as 'mating types'. They prepare the latter for conjugation by changing their cell surface properties. The polypeptide is Mating pheromone 3 (PHR3) (Euplotoides octocarinatus (Freshwater ciliate)).